We begin with the raw amino-acid sequence, 100 residues long: MEATSLLSEIRSLNIAYLRLARRLLATDQALATTALGISQSMGEALLTLDEEACVRMAQTNLFLCRIHFDDRVLAALLAGPRLELLESPASAGKAAPAIA.

Belongs to the FlhD family. Homodimer; disulfide-linked. Forms a heterohexamer composed of two FlhC and four FlhD subunits. Each FlhC binds a FlhD dimer, forming a heterotrimer, and a hexamer assembles by dimerization of two heterotrimers.

It is found in the cytoplasm. Functionally, functions in complex with FlhC as a master transcriptional regulator that regulates transcription of several flagellar and non-flagellar operons by binding to their promoter region. Activates expression of class 2 flagellar genes, including fliA, which is a flagellum-specific sigma factor that turns on the class 3 genes. Also regulates genes whose products function in a variety of physiological pathways. This chain is Flagellar transcriptional regulator FlhD, found in Ralstonia pickettii (strain 12D).